A 123-amino-acid polypeptide reads, in one-letter code: MGKKKSDTASGGAIPEGDNEKGKKIFKQRCEQCHVVNSLQTKTGPTLNGVIGRQSGQVAGFDYSAANKNKGVVWDRQTLFDYLADPKKYIPGTKMVFAGLKKADERADLIKFIEVEAAKKPSA.

The disordered stretch occupies residues 1–21 (MGKKKSDTASGGAIPEGDNEK). Heme c is bound by residues cysteine 30, cysteine 33, histidine 34, and methionine 95.

Belongs to the cytochrome c family. Post-translationally, binds 1 heme c group covalently per subunit.

It is found in the mitochondrion intermembrane space. Electron carrier protein. The oxidized form of the cytochrome c heme group can accept an electron from the heme group of the cytochrome c1 subunit of cytochrome reductase. Cytochrome c then transfers this electron to the cytochrome oxidase complex, the final protein carrier in the mitochondrial electron-transport chain. This chain is Probable cytochrome c 2.2 (cyc-2.2), found in Caenorhabditis elegans.